A 251-amino-acid polypeptide reads, in one-letter code: tRNA (guanine-N(7)-)-methyltransferase (251 aa).

Residues Glu-80, Glu-105, Asp-132, and Asp-155 each coordinate S-adenosyl-L-methionine. The active site involves Asp-155. Substrate is bound by residues Lys-159, Asp-191, and 228-231; that span reads TKFE.

It belongs to the class I-like SAM-binding methyltransferase superfamily. TrmB family.

The catalysed reaction is guanosine(46) in tRNA + S-adenosyl-L-methionine = N(7)-methylguanosine(46) in tRNA + S-adenosyl-L-homocysteine. It participates in tRNA modification; N(7)-methylguanine-tRNA biosynthesis. Catalyzes the formation of N(7)-methylguanine at position 46 (m7G46) in tRNA. The polypeptide is tRNA (guanine-N(7)-)-methyltransferase (Histophilus somni (strain 129Pt) (Haemophilus somnus)).